A 669-amino-acid polypeptide reads, in one-letter code: MSDVAQRLTELRKTLHEHGVRYYVEDAPSIPDAEYDRLMRELLELEAAHPELMSSDSPSLRVGGRPLDAFESVVHEIPMLSLDNAFDDGELESFYRRMTDRIPAVQHSAFCCEPKLDGLAVSLLYENGVLTRAATRGDGTTGENITENVRTIKSIPLRLQGADFPTRLEVRGEVFMPKAGFEALNARALKKGEKQFVNPRNAAAGSLRQLDSKITAQRPLAFYAYSVGVIEGGELATSHYQRFLQLKGWGLPICPETKLVTSLAEVKAFYQDILQRRQSLAYEIDGVVIKVDDIQLQERLGFVARAPRWAIAYKFPAQEELTLLNDVEFQVGRTGAITPVAKLEPVFVGGVTVSNATLHNADEIERLGVMVGDTVVIRRAGDVIPQIVSVVLERRPENAKSIVFPTRCPVCQSDVERVEGEAVARCSGGLICQAQRKEALKHFVSRKAMDVEGLGDKVIEQLVDREMVSTPADLFRLRAGELTILERMGPKSAQNVIDALNKAKQTTLPKFLYALGIREVGEATALNLAQHFLSLEAIQQASLEQFIEVPDVGVVVASHLQAFFAQDRNQQVINELLEQGITWPALTAAPVAVDSALAGKIVVLTGSFTQLSRNDAKAALQALGAKVTGSVSKNTDMVFAGEAAGSKLAKATELGIQVFDEQALIEFLK.

Residues 32–36 (DAEYD), 81–82 (SL), and glutamate 113 contribute to the NAD(+) site. Lysine 115 (N6-AMP-lysine intermediate) is an active-site residue. NAD(+)-binding residues include arginine 136, glutamate 173, lysine 290, and lysine 314. 4 residues coordinate Zn(2+): cysteine 408, cysteine 411, cysteine 426, and cysteine 432. The BRCT domain maps to 592-669 (AVDSALAGKI…DEQALIEFLK (78 aa)).

It belongs to the NAD-dependent DNA ligase family. LigA subfamily. It depends on Mg(2+) as a cofactor. Requires Mn(2+) as cofactor.

The enzyme catalyses NAD(+) + (deoxyribonucleotide)n-3'-hydroxyl + 5'-phospho-(deoxyribonucleotide)m = (deoxyribonucleotide)n+m + AMP + beta-nicotinamide D-nucleotide.. In terms of biological role, DNA ligase that catalyzes the formation of phosphodiester linkages between 5'-phosphoryl and 3'-hydroxyl groups in double-stranded DNA using NAD as a coenzyme and as the energy source for the reaction. It is essential for DNA replication and repair of damaged DNA. This Vibrio cholerae serotype O1 (strain ATCC 39315 / El Tor Inaba N16961) protein is DNA ligase.